The sequence spans 115 residues: Mediator of RNA polymerase II transcription subunit 22 (115 aa).

It belongs to the Mediator complex subunit 22 family. In terms of assembly, component of the Mediator complex.

It localises to the nucleus. Functionally, component of the Mediator complex, a coactivator involved in the regulated transcription of nearly all RNA polymerase II-dependent genes. Mediator functions as a bridge to convey information from gene-specific regulatory proteins to the basal RNA polymerase II transcription machinery. Mediator is recruited to promoters by direct interactions with regulatory proteins and serves as a scaffold for the assembly of a functional preinitiation complex with RNA polymerase II and the general transcription factors. The chain is Mediator of RNA polymerase II transcription subunit 22 (SRB6) from Candida albicans (strain SC5314 / ATCC MYA-2876) (Yeast).